The chain runs to 395 residues: tRNA (guanine-N(7)-)-methyltransferase (395 aa).

Residues E126, E151, and D178 each coordinate S-adenosyl-L-methionine. Substrate contacts are provided by K204 and D234.

Belongs to the class I-like SAM-binding methyltransferase superfamily. TrmB family.

The enzyme catalyses guanosine(46) in tRNA + S-adenosyl-L-methionine = N(7)-methylguanosine(46) in tRNA + S-adenosyl-L-homocysteine. The protein operates within tRNA modification; N(7)-methylguanine-tRNA biosynthesis. Catalyzes the formation of N(7)-methylguanine at position 46 (m7G46) in tRNA. This Campylobacter fetus subsp. fetus (strain 82-40) protein is tRNA (guanine-N(7)-)-methyltransferase.